We begin with the raw amino-acid sequence, 480 residues long: UDP-glucose 6-dehydrogenase 4 (480 aa).

Residues 3 to 20 (KICC…MAVI), D33, R38, T90, T128, and E161 contribute to the NAD(+) site. Residues 157-161 (EFLAE), K216, 216-223 (KLAANAFL), 256-269 (RIGS…VGFG), and G269 each bind substrate. Residue C272 is the Nucleophile of the active site. An NAD(+)-binding site is contributed by K275. 2 residues coordinate substrate: F334 and K335. An NAD(+)-binding site is contributed by R342. R447 is a binding site for substrate.

This sequence belongs to the UDP-glucose/GDP-mannose dehydrogenase family.

It carries out the reaction UDP-alpha-D-glucose + 2 NAD(+) + H2O = UDP-alpha-D-glucuronate + 2 NADH + 3 H(+). It participates in nucleotide-sugar biosynthesis; UDP-alpha-D-glucuronate biosynthesis; UDP-alpha-D-glucuronate from UDP-alpha-D-glucose: step 1/1. Its activity is regulated as follows. Inhibited by UDP-xylose. Functionally, involved in the biosynthesis of UDP-glucuronic acid (UDP-GlcA), providing nucleotide sugars for cell-wall polymers. The protein is UDP-glucose 6-dehydrogenase 4 of Arabidopsis thaliana (Mouse-ear cress).